Consider the following 291-residue polypeptide: UTP--glucose-1-phosphate uridylyltransferase (291 aa).

Belongs to the UDPGP type 2 family.

It carries out the reaction alpha-D-glucose 1-phosphate + UTP + H(+) = UDP-alpha-D-glucose + diphosphate. Functionally, may play a role in stationary phase survival. The protein is UTP--glucose-1-phosphate uridylyltransferase (galU) of Mycoplasma pneumoniae (strain ATCC 29342 / M129 / Subtype 1) (Mycoplasmoides pneumoniae).